The primary structure comprises 252 residues: Probable transcriptional regulatory protein Kole_1935 (252 aa).

It belongs to the TACO1 family.

Its subcellular location is the cytoplasm. The chain is Probable transcriptional regulatory protein Kole_1935 from Kosmotoga olearia (strain ATCC BAA-1733 / DSM 21960 / TBF 19.5.1).